The chain runs to 137 residues: Large-conductance mechanosensitive channel (137 aa).

3 helical membrane passes run 15 to 35 (IDLA…NSIV), 38 to 58 (ILMP…MFIQ), and 80 to 100 (GNFI…FLFV).

It belongs to the MscL family. In terms of assembly, homopentamer.

It is found in the cell inner membrane. Its function is as follows. Channel that opens in response to stretch forces in the membrane lipid bilayer. May participate in the regulation of osmotic pressure changes within the cell. The protein is Large-conductance mechanosensitive channel of Bartonella quintana (strain Toulouse) (Rochalimaea quintana).